Consider the following 132-residue polypeptide: Agouti-signaling protein (132 aa).

The signal sequence occupies residues 1 to 22; it reads MDVTRLLLATLLVFLCFFTVYS. Asn39 carries an N-linked (GlcNAc...) asparagine glycan. Residues 61–87 form a disordered region; sequence HISRKEAEKKRSSKKEASMKKVARPRT. The segment covering 64-79 has biased composition (basic and acidic residues); that stretch reads RKEAEKKRSSKKEASM. Cystine bridges form between Cys93-Cys108, Cys100-Cys114, Cys107-Cys125, Cys111-Cys132, and Cys116-Cys123. In terms of domain architecture, Agouti spans 93-132; that stretch reads CVATRDSCKPPAPACCDPCASCQCRFFRSACSCRVLSLNC.

It localises to the secreted. Functionally, involved in the regulation of melanogenesis. The binding of ASP to MC1R precludes alpha-MSH initiated signaling and thus blocks production of cAMP, leading to a down-regulation of eumelanogenesis (brown/black pigment) and thus increasing synthesis of pheomelanin (yellow/red pigment). The protein is Agouti-signaling protein (ASIP) of Colobus polykomos (Western black-and-white colobus monkey).